Consider the following 366-residue polypeptide: Homoserine O-acetyltransferase (366 aa).

One can recognise an AB hydrolase-1 domain in the interval 47–349; that stretch reads NAILICHALS…SGEGHDSFLL (303 aa). Serine 153 serves as the catalytic Nucleophile. Arginine 221 is a substrate binding site. Residues aspartate 311 and histidine 344 contribute to the active site. A substrate-binding site is contributed by aspartate 345.

The protein belongs to the AB hydrolase superfamily. MetX family. In terms of assembly, homodimer.

It is found in the cytoplasm. It carries out the reaction L-homoserine + acetyl-CoA = O-acetyl-L-homoserine + CoA. It functions in the pathway amino-acid biosynthesis; L-methionine biosynthesis via de novo pathway; O-acetyl-L-homoserine from L-homoserine: step 1/1. In terms of biological role, transfers an acetyl group from acetyl-CoA to L-homoserine, forming acetyl-L-homoserine. The chain is Homoserine O-acetyltransferase from Leptospira interrogans serogroup Icterohaemorrhagiae serovar copenhageni (strain Fiocruz L1-130).